Here is a 208-residue protein sequence, read N- to C-terminus: Octanoyltransferase (208 aa).

Residues 30 to 208 (GTASEAVFIL…ILKQEFYKIF (179 aa)) form the BPL/LPL catalytic domain. Residues 69–76 (RGGKFTYH), 142–144 (SIG), and 155–157 (GVA) contribute to the substrate site. Cys173 functions as the Acyl-thioester intermediate in the catalytic mechanism.

This sequence belongs to the LipB family.

It is found in the cytoplasm. It catalyses the reaction octanoyl-[ACP] + L-lysyl-[protein] = N(6)-octanoyl-L-lysyl-[protein] + holo-[ACP] + H(+). It participates in protein modification; protein lipoylation via endogenous pathway; protein N(6)-(lipoyl)lysine from octanoyl-[acyl-carrier-protein]: step 1/2. Its function is as follows. Catalyzes the transfer of endogenously produced octanoic acid from octanoyl-acyl-carrier-protein onto the lipoyl domains of lipoate-dependent enzymes. Lipoyl-ACP can also act as a substrate although octanoyl-ACP is likely to be the physiological substrate. This Orientia tsutsugamushi (strain Boryong) (Rickettsia tsutsugamushi) protein is Octanoyltransferase.